The chain runs to 341 residues: MSSVIRYDWTAEELHALFDLSLPELLYRAASVHRQHFDPAEIQVSTLLSVKTGGCPEDCSYCPQAQRYDTGVTAQKLMDVDAVVAKARQAKLAGASRFCMGAAWRSPKDRDIPKIASMIREVKALGLETCATLGMLNTCQAQALKDAGLDYYNHNVDTSPDFYDSVIHTRQYQDRLDTLAHVRDVGLKTCCGGIVGMGETRQHRVGLLLTLATLPAHPDSVPVNLLVQVAGTPLHGTQTLDPFEFVRMIAVARITMPRSMVRLSAGRESMSDELQLLCFMAGANSIFYGEKLLTTANPETERDQALFQRLGLRPMHLMENVSNQDQHHGNVHADIACKHVV.

The Radical SAM core domain maps to 40–267 (AEIQVSTLLS…RSMVRLSAGR (228 aa)). Residues Cys55, Cys59, and Cys62 each contribute to the [4Fe-4S] cluster site. [2Fe-2S] cluster is bound by residues Cys99, Cys130, Cys190, and Arg262.

It belongs to the radical SAM superfamily. Biotin synthase family. As to quaternary structure, homodimer. The cofactor is [4Fe-4S] cluster. It depends on [2Fe-2S] cluster as a cofactor.

It carries out the reaction (4R,5S)-dethiobiotin + (sulfur carrier)-SH + 2 reduced [2Fe-2S]-[ferredoxin] + 2 S-adenosyl-L-methionine = (sulfur carrier)-H + biotin + 2 5'-deoxyadenosine + 2 L-methionine + 2 oxidized [2Fe-2S]-[ferredoxin]. Its pathway is cofactor biosynthesis; biotin biosynthesis; biotin from 7,8-diaminononanoate: step 2/2. In terms of biological role, catalyzes the conversion of dethiobiotin (DTB) to biotin by the insertion of a sulfur atom into dethiobiotin via a radical-based mechanism. This chain is Biotin synthase, found in Xylella fastidiosa (strain M12).